We begin with the raw amino-acid sequence, 529 residues long: Non-reducing end alpha-L-arabinofuranosidase BoGH43B (529 aa).

Residues 1 to 23 form the signal peptide; sequence MMKNSCRLLLILIGLWMANVSLA. Catalysis depends on Asp-38, which acts as the Proton acceptor. Catalysis depends on Glu-198, which acts as the Proton donor.

Belongs to the glycosyl hydrolase 43 family.

The protein resides in the periplasm. It catalyses the reaction Hydrolysis of terminal non-reducing alpha-L-arabinofuranoside residues in alpha-L-arabinosides.. Its pathway is glucan metabolism; xyloglucan degradation. Alpha-L-arabinofuranosidase involved in xyloglucan degradation by mediating the cleavage of terminal non-reducing alpha-L-arabinofuranoside residues in xyloglucan branches, converting the 'S' units to 'X' units. The chain is Non-reducing end alpha-L-arabinofuranosidase BoGH43B from Bacteroides ovatus (strain ATCC 8483 / DSM 1896 / JCM 5824 / BCRC 10623 / CCUG 4943 / NCTC 11153).